A 459-amino-acid polypeptide reads, in one-letter code: FBD-associated F-box protein At5g27750 (459 aa).

The 47-residue stretch at 4-50 (FDRISELPESLITQILLCLPTKDSVKTSVLSTRWKNLWLNVPGLDLT) folds into the F-box domain. An FBD domain is found at 374–426 (TEELNLINVPRCIVSTLECVEIKGLFEWEEEEMKIARYFLENAAVLKKLTMSF).

The sequence is that of FBD-associated F-box protein At5g27750 from Arabidopsis thaliana (Mouse-ear cress).